We begin with the raw amino-acid sequence, 242 residues long: Potassium/proton antiporter CemA (242 aa).

2 helical membrane passes run 116–136 and 200–220; these read IIFCLSTNIISFTILSGYSIL and ISGFVSTFPVFLDTFFKYLIF.

The protein belongs to the CemA family.

It is found in the plastid. Its subcellular location is the chloroplast inner membrane. The catalysed reaction is K(+)(in) + H(+)(out) = K(+)(out) + H(+)(in). Functionally, contributes to K(+)/H(+) antiport activity by supporting proton efflux to control proton extrusion and homeostasis in chloroplasts in a light-dependent manner to modulate photosynthesis. Prevents excessive induction of non-photochemical quenching (NPQ) under continuous-light conditions. Indirectly promotes efficient inorganic carbon uptake into chloroplasts. The sequence is that of Potassium/proton antiporter CemA from Chloranthus spicatus (Chulantree).